A 132-amino-acid polypeptide reads, in one-letter code: Chaperone protein SycT (132 aa).

As to quaternary structure, binds to YopT.

Functionally, functions as a specific chaperone for YopT. The chain is Chaperone protein SycT (sycT) from Yersinia pestis.